Here is a 742-residue protein sequence, read N- to C-terminus: Synaptic vesicle glycoprotein 2A (742 aa).

An interaction with SYT1 region spans residues 1 to 57; sequence MEEGFRDRAAFIRGAKDIAKEVKKHAAKKVVKGLDRVQDEYSRRSYSRFEEEDDDDD. At 1-169 the chain is on the cytoplasmic side; sequence MEEGFRDRAA…GHGRFQWTLY (169 aa). Basic and acidic residues predominate over residues 40 to 49; the sequence is EYSRRSYSRF. The tract at residues 40 to 145 is disordered; that stretch reads EYSRRSYSRF…RGEAQRRKDR (106 aa). 2 positions are modified to phosphoserine: Ser-80 and Ser-81. The residue at position 84 (Thr-84) is a Phosphothreonine. A compositionally biased stretch (gly residues) spans 122–137; sequence VRGGLSDGEGPPGGRG. Ser-127 carries the phosphoserine modification. Residues 170 to 190 form a helical membrane-spanning segment; sequence FVLGLALMADGVEVFVVGFVL. Residues 191–205 lie on the Extracellular side of the membrane; that stretch reads PSAEKDMCLSDSNKG. Residues 206-226 form a helical membrane-spanning segment; sequence MLGLIVYLGMMVGAFLWGGLA. At 227–233 the chain is on the cytoplasmic side; it reads DRLGRRQ. The chain crosses the membrane as a helical span at residues 234–254; it reads CLLISLSVNSVFAFFSSFVQG. The Extracellular portion of the chain corresponds to 255 to 262; sequence YGTFLFCR. Residues 263–283 form a helical membrane-spanning segment; the sequence is LLSGVGIGGSIPIVFSYFSEF. Residues 284–294 are Cytoplasmic-facing; it reads LAQEKRGEHLS. Residues 295–315 traverse the membrane as a helical segment; that stretch reads WLCMFWMIGGVYAAAMAWAII. Residues 316 to 334 are Extracellular-facing; that stretch reads PHYGWSFQMGSAYQFHSWR. The helical transmembrane segment at 335–355 threads the bilayer; the sequence is VFVLVCAFPSVFAIGALTTQP. Residues 356–447 lie on the Cytoplasmic side of the membrane; the sequence is ESPRFFLENG…CFSPEYRRIT (92 aa). Ser-393 is subject to Phosphoserine. Residues 448–468 form a helical membrane-spanning segment; it reads LMMMGVWFTMSFSYYGLTVWF. Residues 469 to 598 are Extracellular-facing; that stretch reads PDMIRHLQAV…GTGEGAYMVY (130 aa). Tyr-480 is subject to Phosphotyrosine. N-linked (GlcNAc...) asparagine glycosylation is found at Asn-498, Asn-548, and Asn-573. A helical transmembrane segment spans residues 599–619; it reads FVSFLGTLAVLPGNIVSALLM. Topologically, residues 620–626 are cytoplasmic; the sequence is DKIGRLR. Residues 627 to 647 form a helical membrane-spanning segment; it reads MLAGSSVLSCVSCFFLSFGNS. Residues 648–651 lie on the Extracellular side of the membrane; sequence ESAM. The helical transmembrane segment at 652 to 672 threads the bilayer; it reads IALLCLFGGVSIASWNALDVL. The Cytoplasmic portion of the chain corresponds to 673 to 685; it reads TVELYPSDKRTTA. The helical transmembrane segment at 686–708 threads the bilayer; that stretch reads FGFLNALCKLAAVLGISIFTSFV. The Extracellular segment spans residues 709-712; the sequence is GITK. A helical transmembrane segment spans residues 713-731; that stretch reads AAPILFASAALALGSSLAL. Topologically, residues 732–742 are cytoplasmic; that stretch reads KLPETRGQVLQ.

The protein belongs to the major facilitator superfamily. Interacts with SYT1/synaptotagmin-1 in a calcium-dependent manner. Binds the adapter protein complex AP-2. As to quaternary structure, (Microbial infection) Interacts with C.botulinum neurotoxin type A (BoNT/A, botA). Post-translationally, phosphorylation by CK1 of the N-terminal cytoplasmic domain regulates interaction with SYT1. In terms of processing, N-glycosylated. As to expression, expressed in conventional synapses and cone ribbon synapses in the retina (at protein level). Expressed in diaphragm motor nerve terminals (at protein level). Expressed in hippocampus neurons (at protein level).

It localises to the presynapse. It is found in the cytoplasmic vesicle. The protein resides in the secretory vesicle. The protein localises to the synaptic vesicle membrane. In terms of biological role, plays a role in the control of regulated secretion in neural and endocrine cells, enhancing selectively low-frequency neurotransmission. Positively regulates vesicle fusion by maintaining the readily releasable pool of secretory vesicles. (Microbial infection) Receptor for C.botulinum neurotoxin type A (BoNT/A, botA); the toxin probably binds via extracellular loop 4. Functionally, (Microbial infection) Possible receptor for C.botulinum neurotoxin type D (BoNT/D, botD); BoNT/D does not bind to extracellular loop 4 as do BoNT/A and BoNT/E. Its function is as follows. (Microbial infection) Receptor for C.botulinum neurotoxin type E (BoNT/E); the toxin probably binds via extracellular loop 4. It probably requires glycosylation of Asn-573. This is Synaptic vesicle glycoprotein 2A (Sv2a) from Mus musculus (Mouse).